The sequence spans 98 residues: NADH-ubiquinone oxidoreductase chain 4L (98 aa).

3 helical membrane-spanning segments follow: residues 1–21 (MPSI…GTLI), 26–46 (LMSS…LTSL), and 61–81 (IILL…LVMV).

The protein belongs to the complex I subunit 4L family. In terms of assembly, core subunit of respiratory chain NADH dehydrogenase (Complex I) which is composed of 45 different subunits.

The protein localises to the mitochondrion inner membrane. It catalyses the reaction a ubiquinone + NADH + 5 H(+)(in) = a ubiquinol + NAD(+) + 4 H(+)(out). Core subunit of the mitochondrial membrane respiratory chain NADH dehydrogenase (Complex I) which catalyzes electron transfer from NADH through the respiratory chain, using ubiquinone as an electron acceptor. Part of the enzyme membrane arm which is embedded in the lipid bilayer and involved in proton translocation. In Otolemur crassicaudatus (Brown greater galago), this protein is NADH-ubiquinone oxidoreductase chain 4L (MT-ND4L).